A 574-amino-acid chain; its full sequence is Thiol:disulfide interchange protein DsbD (574 aa).

The first 19 residues, 1–19 (MAHRILTLILLFCSAHASA), serve as a signal peptide directing secretion. Cys-122 and Cys-128 are oxidised to a cystine. Positions 147 to 169 (VKANAATPSAATGEQTRVNSDSP) are disordered. Positions 152 to 169 (ATPSAATGEQTRVNSDSP) are enriched in polar residues. 7 helical membrane passes run 173 to 193 (LPFS…TPCV), 218 to 238 (LLAF…GLVV), 253 to 273 (WVLV…FGLF), 306 to 326 (IAGL…LLYI), 333 to 353 (WLGG…LILV), 367 to 387 (WMEQ…VFLL), and 399 to 419 (LWSV…LNAT). Cys-192 and Cys-314 are oxidised to a cystine. A Thioredoxin domain is found at 430–574 (LLGAAMICAR…FATHLHNRLR (145 aa)). A disulfide bond links Cys-489 and Cys-492.

This sequence belongs to the thioredoxin family. DsbD subfamily.

The protein resides in the cell inner membrane. It carries out the reaction [protein]-dithiol + NAD(+) = [protein]-disulfide + NADH + H(+). The enzyme catalyses [protein]-dithiol + NADP(+) = [protein]-disulfide + NADPH + H(+). Functionally, required to facilitate the formation of correct disulfide bonds in some periplasmic proteins and for the assembly of the periplasmic c-type cytochromes. Acts by transferring electrons from cytoplasmic thioredoxin to the periplasm. This transfer involves a cascade of disulfide bond formation and reduction steps. This Cronobacter sakazakii (strain ATCC BAA-894) (Enterobacter sakazakii) protein is Thiol:disulfide interchange protein DsbD.